Here is a 230-residue protein sequence, read N- to C-terminus: Ribonuclease 3 (230 aa).

One can recognise an RNase III domain in the interval 19-134 (ELLTIALTHR…LLGAIYLEHG (116 aa)). Glu44 lines the Mg(2+) pocket. Residue Asp48 is part of the active site. Mg(2+)-binding residues include Asp120 and Glu123. Residues 161 to 229 (DWKSSLQELT…AASAYKTLDE (69 aa)) enclose the DRBM domain.

Belongs to the ribonuclease III family. In terms of assembly, homodimer. Mg(2+) is required as a cofactor.

It localises to the cytoplasm. It carries out the reaction Endonucleolytic cleavage to 5'-phosphomonoester.. In terms of biological role, digests double-stranded RNA. Involved in the processing of primary rRNA transcript to yield the immediate precursors to the all rRNAs (23S, 16S and 5S). Processes some mRNAs, and tRNAs when they are encoded in the rRNA operon. Processes pre-crRNA and tracrRNA of type II CRISPR loci if present in the organism. This Mycolicibacterium smegmatis (strain ATCC 700084 / mc(2)155) (Mycobacterium smegmatis) protein is Ribonuclease 3 (rnc).